A 345-amino-acid polypeptide reads, in one-letter code: tRNA-specific 2-thiouridylase MnmA 1 (345 aa).

Residues 9–16 (GMSGGIDS) and L35 contribute to the ATP site. C96 functions as the Nucleophile in the catalytic mechanism. An intrachain disulfide couples C96 to C191. Residue G120 coordinates ATP. The tract at residues 138–140 (KDQ) is interaction with tRNA. C191 serves as the catalytic Cysteine persulfide intermediate. The interaction with tRNA stretch occupies residues 293–294 (RY).

It belongs to the MnmA/TRMU family.

Its subcellular location is the cytoplasm. The catalysed reaction is S-sulfanyl-L-cysteinyl-[protein] + uridine(34) in tRNA + AH2 + ATP = 2-thiouridine(34) in tRNA + L-cysteinyl-[protein] + A + AMP + diphosphate + H(+). Catalyzes the 2-thiolation of uridine at the wobble position (U34) of tRNA, leading to the formation of s(2)U34. The chain is tRNA-specific 2-thiouridylase MnmA 1 from Aliarcobacter butzleri (strain RM4018) (Arcobacter butzleri).